A 125-amino-acid polypeptide reads, in one-letter code: NADPH-dependent 7-cyano-7-deazaguanine reductase (125 aa).

The active-site Thioimide intermediate is Cys41. Asp48 (proton donor) is an active-site residue. Residues 63–65 (IEL) and 82–83 (HE) each bind substrate.

It belongs to the GTP cyclohydrolase I family. QueF type 1 subfamily.

The protein localises to the cytoplasm. It catalyses the reaction 7-aminomethyl-7-carbaguanine + 2 NADP(+) = 7-cyano-7-deazaguanine + 2 NADPH + 3 H(+). It participates in tRNA modification; tRNA-queuosine biosynthesis. Its function is as follows. Catalyzes the NADPH-dependent reduction of 7-cyano-7-deazaguanine (preQ0) to 7-aminomethyl-7-deazaguanine (preQ1). In Sulfurovum sp. (strain NBC37-1), this protein is NADPH-dependent 7-cyano-7-deazaguanine reductase.